Here is a 94-residue protein sequence, read N- to C-terminus: Phosphoribosyl-ATP pyrophosphatase (94 aa).

Belongs to the PRA-PH family.

Its subcellular location is the cytoplasm. The enzyme catalyses 1-(5-phospho-beta-D-ribosyl)-ATP + H2O = 1-(5-phospho-beta-D-ribosyl)-5'-AMP + diphosphate + H(+). Its pathway is amino-acid biosynthesis; L-histidine biosynthesis; L-histidine from 5-phospho-alpha-D-ribose 1-diphosphate: step 2/9. This Pyrobaculum calidifontis (strain DSM 21063 / JCM 11548 / VA1) protein is Phosphoribosyl-ATP pyrophosphatase.